We begin with the raw amino-acid sequence, 540 residues long: Membrane protein insertase YidC (540 aa).

Residues 6–26 (NILLIALALVSFLLFQQWQVA) traverse the membrane as a helical segment. The interval 36-63 (QAQSSSTLPAPSFADELDPVPGQQQASA) is disordered. The next 4 helical transmembrane spans lie at 342–362 (AFIQSFVGNWGVAIICLTFIV), 417–437 (LGGCLPLILQMPIFIALYWAL), 455–475 (LSAQDPYYILPLLMGASMFLI), and 496–516 (PVMFTFFFLFFPSGLVLYWLV).

Belongs to the OXA1/ALB3/YidC family. Type 1 subfamily. In terms of assembly, interacts with the Sec translocase complex via SecD. Specifically interacts with transmembrane segments of nascent integral membrane proteins during membrane integration.

The protein localises to the cell inner membrane. Its function is as follows. Required for the insertion and/or proper folding and/or complex formation of integral membrane proteins into the membrane. Involved in integration of membrane proteins that insert both dependently and independently of the Sec translocase complex, as well as at least some lipoproteins. Aids folding of multispanning membrane proteins. The protein is Membrane protein insertase YidC of Vibrio campbellii (strain ATCC BAA-1116).